We begin with the raw amino-acid sequence, 90 residues long: Acylphosphatase (90 aa).

One can recognise an Acylphosphatase-like domain in the interval 3–90 (RYSAIVQGRV…DGEKKFSIKY (88 aa)). Active-site residues include Arg18 and Asn36.

The protein belongs to the acylphosphatase family.

It carries out the reaction an acyl phosphate + H2O = a carboxylate + phosphate + H(+). This Clostridium beijerinckii (strain ATCC 51743 / NCIMB 8052) (Clostridium acetobutylicum) protein is Acylphosphatase (acyP).